The chain runs to 198 residues: Probable GTP-binding protein EngB (198 aa).

Residues 22–195 (DLPEIALAGR…WKAIHKMTKT (174 aa)) enclose the EngB-type G domain. Residues 30 to 37 (GRSNVGKS), 57 to 61 (GKTQT), 75 to 78 (DVPG), 142 to 145 (TKAD), and 174 to 176 (FSS) each bind GTP. Residues Ser37 and Thr59 each coordinate Mg(2+).

This sequence belongs to the TRAFAC class TrmE-Era-EngA-EngB-Septin-like GTPase superfamily. EngB GTPase family. It depends on Mg(2+) as a cofactor.

Necessary for normal cell division and for the maintenance of normal septation. The chain is Probable GTP-binding protein EngB from Bacillus mycoides (strain KBAB4) (Bacillus weihenstephanensis).